The chain runs to 574 residues: Streptolysin O (574 aa).

Residues 1-36 form the signal peptide; it reads MKDMSNKKIFKKYSRVAGLLTAALIVGNLVTANADS. Low complexity predominate over residues 37 to 52; the sequence is NKQNTANTETTTTNEQ. Disordered stretches follow at residues 37–64 and 84–111; these read NKQNTANTETTTTNEQPKPESSELTTEK and KEMPLESAEKEEKKSEDNKKSEEDHTEE. Over residues 53 to 64 the composition is skewed to basic and acidic residues; that stretch reads PKPESSELTTEK. The next 4 membrane-spanning stretches (beta stranded) occupy residues 263–276, 283–292, 361–370, and 378–390; these read KSQIEAALNVNSKI, IDFKSISKGE, SNDVEAAFSA, and KTNGKYSDILENS. The Conserved undecapeptide motif lies at 532-542; sequence ECTGLAWEWWR. The Cholesterol binding signature appears at 564–565; that stretch reads TL.

Belongs to the cholesterol-dependent cytolysin family. Homooligomeric pore complex of 35 to 50 subunits; when inserted in the host membrane.

Its subcellular location is the secreted. It is found in the host cell membrane. Functionally, a cholesterol-dependent toxin that causes cytolysis by forming pores in cholesterol containing host membranes. After binding to target membranes, the protein undergoes a major conformation change, leading to its insertion in the host membrane and formation of an oligomeric pore complex. Cholesterol is required for binding to host membranes, membrane insertion and pore formation; cholesterol binding is mediated by a Thr-Leu pair in the C-terminus. Can be reversibly inactivated by oxidation. The sequence is that of Streptolysin O (slo) from Streptococcus canis.